Reading from the N-terminus, the 436-residue chain is Histidinol dehydrogenase (436 aa).

Ser-237, Gln-259, and His-262 together coordinate substrate. 2 residues coordinate Zn(2+): Gln-259 and His-262. Residues Glu-327 and His-328 each act as proton acceptor in the active site. Residues His-328, Asp-361, Glu-415, and His-420 each coordinate substrate. Asp-361 is a binding site for Zn(2+). Zn(2+) is bound at residue His-420.

The protein belongs to the histidinol dehydrogenase family. The cofactor is Zn(2+).

The enzyme catalyses L-histidinol + 2 NAD(+) + H2O = L-histidine + 2 NADH + 3 H(+). The protein operates within amino-acid biosynthesis; L-histidine biosynthesis; L-histidine from 5-phospho-alpha-D-ribose 1-diphosphate: step 9/9. Functionally, catalyzes the sequential NAD-dependent oxidations of L-histidinol to L-histidinaldehyde and then to L-histidine. The sequence is that of Histidinol dehydrogenase from Helicobacter hepaticus (strain ATCC 51449 / 3B1).